A 239-amino-acid chain; its full sequence is MARGCLCCLKYMMFLFNLIFWLCGCGLLGVGIWLSVSQGNFATFSPSFPSLSAANLVIVIGTVVMVTGFLGCLGAIKENKCLLLSFFIILLIILLTELILLILFFVYMDKVNENAKQDLKDGLLLYNSENNVGLKNAWNIIQAEMHCCGVTDYTDWYPVLGENTVPDRCCMENSQDCGHNSTSLVWKTGCYEKVKMWFDDNKHVLGTIGMCILIIQILGMAFSMTLFQQIHRTGKKYDA.

Topologically, residues methionine 1–methionine 13 are cytoplasmic. A helical transmembrane segment spans residues phenylalanine 14–leucine 34. Residues serine 35–asparagine 55 lie on the Extracellular side of the membrane. The helical transmembrane segment at leucine 56–isoleucine 76 threads the bilayer. At lysine 77–serine 85 the chain is on the cytoplasmic side. A helical transmembrane segment spans residues phenylalanine 86–valine 106. Over tyrosine 107–histidine 203 the chain is Extracellular. Asparagine 180 carries an N-linked (GlcNAc...) asparagine glycan. The chain crosses the membrane as a helical span at residues valine 204–methionine 224. The Cytoplasmic segment spans residues threonine 225–alanine 239.

This sequence belongs to the tetraspanin (TM4SF) family.

It localises to the membrane. The protein is Tetraspanin-9 (tspan9) of Xenopus laevis (African clawed frog).